The chain runs to 828 residues: Isethionate sulfite-lyase (828 aa).

Positions 30–698 (ERVFTILESF…VVSATPNGRK (669 aa)) constitute a PFL domain. 2-hydroxyethane-1-sulfonate is bound by residues arginine 187, glutamine 191, 466 to 468 (CTE), and arginine 676. Cysteine 466 (cysteine radical intermediate) is an active-site residue. Glutamate 468 acts as the Proton acceptor in catalysis. One can recognise a Glycine radical domain in the interval 705–828 (DGSSASHGAD…LIARTGHDVM (124 aa)). A Glycine radical modification is found at glycine 803.

Belongs to the glycyl radical enzyme (GRE) family. As to quaternary structure, homodimer. Requires the activating protein IseH to generate the key active site glycyl radical on Gly-803 that is involved in catalysis.

The catalysed reaction is 2-hydroxyethane-1-sulfonate = acetaldehyde + sulfite + H(+). It participates in organosulfur degradation; alkanesulfonate degradation. In terms of biological role, involved in an anaerobic respiration pathway that converts the sulfonate isethionate (2-hydroxyethanesulfonate) to ammonia, acetate and sulfide. Catalyzes the radical-mediated C-S bond cleavage of isethionate (2-hydroxyethanesulfonate) to form sulfite and acetaldehyde. Shows no activity with taurine or ethanolamine as substrates. This Nitratidesulfovibrio vulgaris (strain ATCC 29579 / DSM 644 / CCUG 34227 / NCIMB 8303 / VKM B-1760 / Hildenborough) (Desulfovibrio vulgaris) protein is Isethionate sulfite-lyase.